Consider the following 985-residue polypeptide: Coiled-coil domain-containing protein 33 (985 aa).

The tract at residues 228–263 (MSPFSTDSDQEGLSWEAGPWQHPAQVPEEPQGRLDT) is disordered. The region spanning 263 to 398 (TSQDPYPAAN…VFLRGVNEPL (136 aa)) is the C2 domain. Residues 599 to 745 (VEMNNYRRAM…LEERLCERKE (147 aa)) adopt a coiled-coil conformation. Residues 821–842 (AERLQDTNGPGHPKSTETLPAQ) form a disordered region. Residues 885–928 (DKFNLLAKLEQAQSRILSLENQLEESARHWAREKQNLAIRLQEQ) adopt a coiled-coil conformation. The segment at 931–985 (GFGQPPNSIIIDQPNAGASKNPQQLSKLEPSLPSSDKKLNRPSDSQIEISNNQKT) is disordered. Composition is skewed to polar residues over residues 946-956 (AGASKNPQQLS) and 972-985 (PSDS…NQKT).

This is Coiled-coil domain-containing protein 33 (Ccdc33) from Mus musculus (Mouse).